Consider the following 287-residue polypeptide: tRNA selenocysteine 1-associated protein 1 (287 aa).

RRM domains follow at residues 3–86 (ASLW…YVTY) and 96–175 (YSLF…VAIP).

The protein belongs to the RRM TRSPAP family. In terms of assembly, component of the tRNA(Sec) complex composed at least of EEFSEC, SECISBP2, SEPHS1, SEPSECS, TRNAU1AP and tRNA(Sec). Found in a complex with tRNA(Sec). Interacts with SEPSECS. Associates with mRNP and/or polysomes. Found in a complex with EEFSEC, SECISBP2, TRNAU1AP and tRNA(Sec).

It localises to the nucleus. It is found in the cytoplasm. Functionally, involved in the early steps of selenocysteine biosynthesis and tRNA(Sec) charging to the later steps resulting in the cotranslational incorporation of selenocysteine into selenoproteins. Stabilizes the SECISBP2, EEFSEC and tRNA(Sec) complex. May be involved in the methylation of tRNA(Sec). Enhances efficiency of selenoproteins synthesis. In Pongo abelii (Sumatran orangutan), this protein is tRNA selenocysteine 1-associated protein 1 (TRNAU1AP).